A 76-amino-acid chain; its full sequence is Small proline-rich protein 4 (76 aa).

Residues 38–76 (PKTKDPCVPQAKKQCPARSTTNPAQEKCPAQQDPKCKQK) are disordered.

The protein belongs to the cornifin (SPRR) family. In terms of processing, cross-linked to membrane proteins by transglutaminase.

The protein resides in the cytoplasm. Its subcellular location is the cell cortex. Functionally, cross-linked envelope protein of keratinocytes. Involved in UV-induced cornification. This is Small proline-rich protein 4 (Sprr4) from Mus musculus (Mouse).